Here is a 396-residue protein sequence, read N- to C-terminus: Enoyl-[acyl-carrier-protein] reductase [NADH] (396 aa).

Residues 47–52, 73–74, 110–111, and 138–139 contribute to the NAD(+) site; these read GASTGF, FE, DA, and LA. A substrate-binding site is contributed by Tyr-224. The Proton donor role is filled by Tyr-234. NAD(+)-binding positions include Lys-243 and 272 to 274; that span reads LVT.

This sequence belongs to the TER reductase family. As to quaternary structure, monomer.

It carries out the reaction a 2,3-saturated acyl-[ACP] + NAD(+) = a (2E)-enoyl-[ACP] + NADH + H(+). It functions in the pathway lipid metabolism; fatty acid biosynthesis. Involved in the final reduction of the elongation cycle of fatty acid synthesis (FAS II). Catalyzes the reduction of a carbon-carbon double bond in an enoyl moiety that is covalently linked to an acyl carrier protein (ACP). This is Enoyl-[acyl-carrier-protein] reductase [NADH] from Cytophaga hutchinsonii (strain ATCC 33406 / DSM 1761 / CIP 103989 / NBRC 15051 / NCIMB 9469 / D465).